Reading from the N-terminus, the 873-residue chain is Leucine--tRNA ligase (873 aa).

The 'HIGH' region signature appears at 48–58 (PYPSGKLHMGH). The 'KMSKS' region signature appears at 636-640 (KMSKS). ATP is bound at residue K639.

This sequence belongs to the class-I aminoacyl-tRNA synthetase family.

Its subcellular location is the cytoplasm. The catalysed reaction is tRNA(Leu) + L-leucine + ATP = L-leucyl-tRNA(Leu) + AMP + diphosphate. The polypeptide is Leucine--tRNA ligase (Cupriavidus pinatubonensis (strain JMP 134 / LMG 1197) (Cupriavidus necator (strain JMP 134))).